The sequence spans 444 residues: Putative zinc metalloprotease PD_0327 (444 aa).

Residue His22 participates in Zn(2+) binding. The active site involves Glu23. Zn(2+) is bound at residue His26. Residues Ile98 to Phe120 form a helical membrane-spanning segment. A PDZ domain is found at Thr192–Gly278. A run of 2 helical transmembrane segments spans residues Val371–Ile393 and Ala418–Asn440.

The protein belongs to the peptidase M50B family. It depends on Zn(2+) as a cofactor.

Its subcellular location is the cell inner membrane. This chain is Putative zinc metalloprotease PD_0327, found in Xylella fastidiosa (strain Temecula1 / ATCC 700964).